Reading from the N-terminus, the 279-residue chain is Orotidine 5'-phosphate decarboxylase (279 aa).

Residues aspartate 8, lysine 30, 58-67 (DLKIHDIPNT), threonine 117, arginine 177, glutamine 186, glycine 206, and arginine 207 contribute to the substrate site. Catalysis depends on lysine 60, which acts as the Proton donor.

Belongs to the OMP decarboxylase family. Type 1 subfamily. In terms of assembly, homodimer.

The catalysed reaction is orotidine 5'-phosphate + H(+) = UMP + CO2. It functions in the pathway pyrimidine metabolism; UMP biosynthesis via de novo pathway; UMP from orotate: step 2/2. In terms of biological role, catalyzes the decarboxylation of orotidine 5'-monophosphate (OMP) to uridine 5'-monophosphate (UMP). This is Orotidine 5'-phosphate decarboxylase from Campylobacter jejuni (strain RM1221).